Reading from the N-terminus, the 293-residue chain is Urease accessory protein UreD (293 aa).

The interval 1–22 (MAVAQQAWSPGADPAPSAAPVS) is disordered. A compositionally biased stretch (low complexity) spans 7–22 (AWSPGADPAPSAAPVS).

It belongs to the UreD family. UreD, UreF and UreG form a complex that acts as a GTP-hydrolysis-dependent molecular chaperone, activating the urease apoprotein by helping to assemble the nickel containing metallocenter of UreC. The UreE protein probably delivers the nickel.

It is found in the cytoplasm. Required for maturation of urease via the functional incorporation of the urease nickel metallocenter. The protein is Urease accessory protein UreD of Alkalilimnicola ehrlichii (strain ATCC BAA-1101 / DSM 17681 / MLHE-1).